Here is a 794-residue protein sequence, read N- to C-terminus: Protein sel-1 homolog 1 (794 aa).

A signal peptide spans 1-21 (MQVHVGLTLLLCAVLLSSATA). The segment at 20 to 91 (TASSDDESNQ…EEEVSVGEEI (72 aa)) is disordered. The tract at residues 22 to 737 (SSDDESNQDE…DIFTQLDMDQ (716 aa)) is interaction with ERLEC1, OS9 and SYVN1. At 22–738 (SSDDESNQDE…IFTQLDMDQL (717 aa)) the chain is on the lumenal side. Composition is skewed to acidic residues over residues 23–32 (SDDESNQDES) and 62–77 (DSED…EEEE). Ser-63 bears the Phosphoserine mark. The region spanning 122–170 (AHGEPCHFPFLFLDKEYDECTSDGRQDGRLWCATTYDYKTDEKWGFCET) is the Fibronectin type-II domain. Intrachain disulfides connect Cys-127–Cys-153 and Cys-141–Cys-168. 9 Sel1-like repeats span residues 183–218 (AEMI…GMNH), 219–254 (TKAL…EEGS), 255–290 (PKGQ…LGGN), 291–326 (LIAH…NHVA), 373–409 (VQAQ…NAGN), 410–446 (SHAM…DMGN), 447–482 (PVGQ…EQGW), 483–518 (VDGQ…QGGH), and 519–554 (ILAF…ERGR). Asn-195 and Asn-217 each carry an N-linked (GlcNAc...) asparagine glycan. A glycan (N-linked (GlcNAc...) asparagine) is linked at Asn-272. The interval 352-537 (NSGMLEEDLI…MHASGTGVMR (186 aa)) is important for homodimerization and oligomerization. Asn-431 carries N-linked (GlcNAc...) asparagine glycosylation. N-linked (GlcNAc...) asparagine glycosylation occurs at Asn-608. Sel1-like repeat units lie at residues 627-662 (TVAR…EQQH) and 664-699 (AQAM…EASP). Residues 643–723 (TDVDYETAFI…VVYFLQYIRE (81 aa)) form an interaction with SYVN1 region. A mediates retention in the endoplasmic reticulum region spans residues 738–794 (LLGPEWDLYLMTIIALLLGTVIAYRQRQHQDVPVPRPPGPWPAPPQQEGPPEQQPPQ). A helical transmembrane segment spans residues 739–759 (LGPEWDLYLMTIIALLLGTVI). Over 760–794 (AYRQRQHQDVPVPRPPGPWPAPPQQEGPPEQQPPQ) the chain is Cytoplasmic. The interval 768-794 (DVPVPRPPGPWPAPPQQEGPPEQQPPQ) is disordered. The span at 771–794 (VPRPPGPWPAPPQQEGPPEQQPPQ) shows a compositional bias: pro residues.

Belongs to the sel-1 family. In terms of assembly, homodimer and homooligomer. May form a complex with ERLEC1, HSPA5, OS9, and SYVN1. Interacts with FOXRED2 and EDEM1. Interacts with LPL and LMF1; may stabilize the complex formed by LPL and LMF1 and thereby promote the export of LPL dimers. Component of the HRD1 complex, which comprises at least SYNV1/HRD1, DERL1/2, FAM8A1, HERPUD1/HERP, OS9, SEL1L and UBE2J1. SYNV1 assembles with SEL1L and FAM8A1 through its transmembrane domains, but interaction with its cytoplasmic domain is required to confer stability to FAM8A1 and enhance recruitment of HERPUD1. The interaction with SYNV1/HRD1 is direct. N-glycosylated.

It localises to the endoplasmic reticulum membrane. Its function is as follows. Plays a role in the endoplasmic reticulum quality control (ERQC) system also called ER-associated degradation (ERAD) involved in ubiquitin-dependent degradation of misfolded endoplasmic reticulum proteins. Enhances SYVN1 stability. Plays a role in LPL maturation and secretion. Required for normal differentiation of the pancreas epithelium, and for normal exocrine function and survival of pancreatic cells. May play a role in Notch signaling. This is Protein sel-1 homolog 1 (Sel1l) from Mesocricetus auratus (Golden hamster).